The primary structure comprises 577 residues: Arginine--tRNA ligase (577 aa).

Positions 132-142 (ANPTGPLHVGH) match the 'HIGH' region motif.

It belongs to the class-I aminoacyl-tRNA synthetase family. As to quaternary structure, monomer.

The protein resides in the cytoplasm. The enzyme catalyses tRNA(Arg) + L-arginine + ATP = L-arginyl-tRNA(Arg) + AMP + diphosphate. The chain is Arginine--tRNA ligase from Pelagibacter ubique (strain HTCC1062).